Here is a 610-residue protein sequence, read N- to C-terminus: UvrABC system protein C (610 aa).

The GIY-YIG domain occupies 16 to 94 (SQPGVYRMYD…IKLYQPRYNV (79 aa)). The 36-residue stretch at 204–239 (DQVLTQLIARMEKASQDLAFEEAARIRDQIQAVRRV) folds into the UVR domain.

This sequence belongs to the UvrC family. Interacts with UvrB in an incision complex.

The protein localises to the cytoplasm. Its function is as follows. The UvrABC repair system catalyzes the recognition and processing of DNA lesions. UvrC both incises the 5' and 3' sides of the lesion. The N-terminal half is responsible for the 3' incision and the C-terminal half is responsible for the 5' incision. The chain is UvrABC system protein C from Salmonella dublin (strain CT_02021853).